A 228-amino-acid chain; its full sequence is NADH-quinone oxidoreductase subunit C (228 aa).

This sequence belongs to the complex I 30 kDa subunit family. As to quaternary structure, NDH-1 is composed of 14 different subunits. Subunits NuoB, C, D, E, F, and G constitute the peripheral sector of the complex.

It localises to the cell membrane. It carries out the reaction a quinone + NADH + 5 H(+)(in) = a quinol + NAD(+) + 4 H(+)(out). Functionally, NDH-1 shuttles electrons from NADH, via FMN and iron-sulfur (Fe-S) centers, to quinones in the respiratory chain. The immediate electron acceptor for the enzyme in this species is believed to be a menaquinone. Couples the redox reaction to proton translocation (for every two electrons transferred, four hydrogen ions are translocated across the cytoplasmic membrane), and thus conserves the redox energy in a proton gradient. This Mycobacteroides abscessus (strain ATCC 19977 / DSM 44196 / CCUG 20993 / CIP 104536 / JCM 13569 / NCTC 13031 / TMC 1543 / L948) (Mycobacterium abscessus) protein is NADH-quinone oxidoreductase subunit C.